The primary structure comprises 200 residues: Holliday junction branch migration complex subunit RuvA (200 aa).

The domain I stretch occupies residues 1–63; sequence MIASVRGEVL…EDSMTLYGFP (63 aa). A domain II region spans residues 64-142; it reads DSESKELFGL…AVASTSGAVP (79 aa). The flexible linker stretch occupies residues 142-146; the sequence is PLGAG. Residues 147–200 are domain III; the sequence is GGGSVRDQIVEALVGLGFPAKQAEQAADSVLAEAPESTTSTALRSALSLLGKTR.

This sequence belongs to the RuvA family. As to quaternary structure, homotetramer. Forms an RuvA(8)-RuvB(12)-Holliday junction (HJ) complex. HJ DNA is sandwiched between 2 RuvA tetramers; dsDNA enters through RuvA and exits via RuvB. An RuvB hexamer assembles on each DNA strand where it exits the tetramer. Each RuvB hexamer is contacted by two RuvA subunits (via domain III) on 2 adjacent RuvB subunits; this complex drives branch migration. In the full resolvosome a probable DNA-RuvA(4)-RuvB(12)-RuvC(2) complex forms which resolves the HJ.

The protein resides in the cytoplasm. Its function is as follows. The RuvA-RuvB-RuvC complex processes Holliday junction (HJ) DNA during genetic recombination and DNA repair, while the RuvA-RuvB complex plays an important role in the rescue of blocked DNA replication forks via replication fork reversal (RFR). RuvA specifically binds to HJ cruciform DNA, conferring on it an open structure. The RuvB hexamer acts as an ATP-dependent pump, pulling dsDNA into and through the RuvAB complex. HJ branch migration allows RuvC to scan DNA until it finds its consensus sequence, where it cleaves and resolves the cruciform DNA. This Rhodococcus jostii (strain RHA1) protein is Holliday junction branch migration complex subunit RuvA.